Reading from the N-terminus, the 347-residue chain is MLIKQGDRLINTRNWSELVKPEQITRDSDPADAMYGKFVCEPLERGYGTTIGNALRRVLLSSLQGAAFVSVKVSGVQHEFTTIPGVLEDVTDIVLNLKQVRLAMDTDEPQFLELSVNKKGAVKAGDIKTNQHVMVLNPDLHIATLTEDLELTFEFEVRMGKGYVPADMHEGLSEEIGLIKLDSSFAPVRKVAYTVEQARVGQMTNYDKLIIEVWTDGSVTPEDAIAYSAKIIKDQISVFINFDERISGESSGNSSGSSDVNENLFKGIDELELSVRATNCLKSANITLVGELVQKSENEMLKTKNFGRKSLDEIKRVLCDMSLDFGMKVDGFEKKYQEWKRKQQNEA.

The tract at residues 1 to 243 is alpha N-terminal domain (alpha-NTD); that stretch reads MLIKQGDRLI…DQISVFINFD (243 aa). Residues 260–347 form an alpha C-terminal domain (alpha-CTD) region; it reads VNENLFKGID…EWKRKQQNEA (88 aa).

This sequence belongs to the RNA polymerase alpha chain family. In terms of assembly, homodimer. The RNAP catalytic core consists of 2 alpha, 1 beta, 1 beta' and 1 omega subunit. When a sigma factor is associated with the core the holoenzyme is formed, which can initiate transcription.

The catalysed reaction is RNA(n) + a ribonucleoside 5'-triphosphate = RNA(n+1) + diphosphate. In terms of biological role, DNA-dependent RNA polymerase catalyzes the transcription of DNA into RNA using the four ribonucleoside triphosphates as substrates. This Nitratidesulfovibrio vulgaris (strain DSM 19637 / Miyazaki F) (Desulfovibrio vulgaris) protein is DNA-directed RNA polymerase subunit alpha.